Reading from the N-terminus, the 245-residue chain is Short-chain dehydrogenase/reductase pyiH (245 aa).

Positions 18, 42, 68, and 95 each coordinate NADP(+). Ser-150 functions as the Proton donor in the catalytic mechanism.

Belongs to the short-chain dehydrogenases/reductases (SDR) family.

It participates in mycotoxin biosynthesis. Its function is as follows. Short-chain dehydrogenase/reductase; part of the gene cluster that mediates the biosynthesis of the mycotoxin pyrichalasin H, a tyrosine-derived cytochalasan that inhibits the growth of rice seedlings, but also inhibits lymphocyte capping and actin polymerization and alters cell morphology. Pyrichalasin H is indicated as the responsible agent for the genus-specific pathogenicity of M.grisea toward crabgrass. The first step in the pathway is catalyzed by the O-methyltransferase pyiA which methylates free tyrosine to generate the precursor O-methyltyrosine. The hybrid PKS-NRPS pyiS, assisted by the enoyl reductase pyiC, are responsible for fusion of the O-methyltyrosine precursor and the polyketide backbone. The polyketide synthase module (PKS) of pyiS is responsible for the synthesis of the polyketide backbone and the downstream nonribosomal peptide synthetase (NRPS) amidates the carboxyl end of the polyketide with the O-methyltyrosine precursor. As the NRPS A-domain demonstrates substrate tolerance, pyiS can also use phenylalanine, tyrosine and even para-chlorophenylalanine as amino acid precursor, which leads to the production of novel cytochalasans, including halogenated cytochalasans. Because pyiS lacks a designated enoylreductase (ER) domain, the required activity is provided the enoyl reductase pyiC. Reduction by the hydrolyase pyiE leads to 1,5-dihydropyrrolone, which is substrate for dehydration and intra-molecular Diels-Alder cyclization by the Diels-Alderase pyiF to yield the required isoindolone-fused macrocycle. The tailoring cytochrome P450 monooxygenases piyD and piyG catalyze the hydroxylation at C-18 and C-7, respectivily, whereas the short-chain dehydrogenase/reductase pyiH reduces the carbonyl at C-21 in preparation for the transfer of an acetyl group by the acetyltransferase pyiB. These 3 reactions whose order is not clear yet, lead to the production of O-methylpyrichalasin J, a deacetylated pyrichalasin H. Finally, pyiB to converts O-methylpyrichalasin J into the final product pyrichalasin H via acetylation of C-21. The protein is Short-chain dehydrogenase/reductase pyiH of Pyricularia grisea (Crabgrass-specific blast fungus).